The primary structure comprises 317 residues: Probable deoxyhypusine synthase (317 aa).

The active-site Nucleophile is the lysine 285.

The protein belongs to the deoxyhypusine synthase family. NAD(+) is required as a cofactor.

It carries out the reaction [eIF5A protein]-L-lysine + spermidine = [eIF5A protein]-deoxyhypusine + propane-1,3-diamine. It participates in protein modification; eIF5A hypusination. In terms of biological role, catalyzes the NAD-dependent oxidative cleavage of spermidine and the subsequent transfer of the butylamine moiety of spermidine to the epsilon-amino group of a specific lysine residue of the eIF-5A precursor protein to form the intermediate deoxyhypusine residue. In Methanosarcina thermophila, this protein is Probable deoxyhypusine synthase (dys).